A 354-amino-acid polypeptide reads, in one-letter code: MFLIQCLISAVIFYIQVTNALIFKGDHVSLQVNSSLTSILIPMQNDNYTEIKGQLVFIGEQLPTGTNYSGTLELLYADTVAFCFRSVQVIRYDGCPRIRTSAFISCRYKHSWHYGNSTDRISTEPDAGVMLKITKPGINDAGVYVLLVRLDHSRSTDGFILGVNVYTAGSHHNIHGVIYTSPSLQNGYSTRALFQQARLCDLPATPKGSGTSLFQHMLDLRAGKSLEDNPWLHEDVVTTETKSVVKEGIENHVYPTDMSTLPEKSLNDPPENLLIIIPIVASVMILTAMVIVIVISVKRRRIKKHPIYRPNTKTRRGIQNATPESDVMLEAAIAQLATIREESPPHSVVNPFVK.

The first 20 residues, 1-20, serve as a signal peptide directing secretion; the sequence is MFLIQCLISAVIFYIQVTNA. The Virion surface portion of the chain corresponds to 21–274; it reads LIFKGDHVSL…SLNDPPENLL (254 aa). 4 N-linked (GlcNAc...) asparagine; by host glycosylation sites follow: asparagine 33, asparagine 47, asparagine 67, and asparagine 116. The chain crosses the membrane as a helical span at residues 275–295; that stretch reads IIIPIVASVMILTAMVIVIVI. The Intravirion segment spans residues 296–354; the sequence is SVKRRRIKKHPIYRPNTKTRRGIQNATPESDVMLEAAIAQLATIREESPPHSVVNPFVK. Serine 343 carries the post-translational modification Phosphoserine.

The protein belongs to the alphaherpesvirinae glycoprotein I family. As to quaternary structure, interacts with gE; this interaction enhances the Fc receptor function of gE.

It localises to the virion membrane. Its subcellular location is the host cell membrane. It is found in the host cell junction. The protein resides in the host Golgi apparatus membrane. In terms of biological role, in epithelial cells, the heterodimer gE/gI is required for the cell-to-cell spread of the virus, by sorting nascent virions to cell junctions. Once the virus reaches the cell junctions, virus particles can spread to adjacent cells extremely rapidly through interactions with cellular receptors that accumulate at these junctions. Implicated in basolateral spread in polarized cells. In neuronal cells, gE/gI is essential for the anterograde spread of the infection throughout the host nervous system. Together with US9, the heterodimer gE/gI is involved in the sorting and transport of viral structural components toward axon tips. Functionally, the heterodimer gE/gI serves as a receptor for the Fc part of human IgG. Dissociation of gE/gI from IgG occurs at acidic pH. May thus be involved in anti-VZV antibodies bipolar bridging, followed by intracellular endocytosis and degradation, thereby interfering with host Ig-mediated immune responses. In Homo sapiens (Human), this protein is Envelope glycoprotein I (gI).